The sequence spans 368 residues: Chaperone protein DnaJ (368 aa).

Positions 5–65 (DYYEVLGLTK…QKKARYDQFG (61 aa)) constitute a J domain. The CR-type zinc-finger motif lies at 125–207 (GKETEIEIPK…CRGEGKVQKR (83 aa)). Zn(2+)-binding residues include Cys138, Cys141, Cys155, Cys158, Cys181, Cys184, Cys195, and Cys198. 4 CXXCXGXG motif repeats span residues 138–145 (CETCHGSG), 155–162 (CSTCNGAG), 181–188 (CTTCHGTG), and 195–202 (CSTCRGEG).

This sequence belongs to the DnaJ family. Homodimer. Requires Zn(2+) as cofactor.

It localises to the cytoplasm. In terms of biological role, participates actively in the response to hyperosmotic and heat shock by preventing the aggregation of stress-denatured proteins and by disaggregating proteins, also in an autonomous, DnaK-independent fashion. Unfolded proteins bind initially to DnaJ; upon interaction with the DnaJ-bound protein, DnaK hydrolyzes its bound ATP, resulting in the formation of a stable complex. GrpE releases ADP from DnaK; ATP binding to DnaK triggers the release of the substrate protein, thus completing the reaction cycle. Several rounds of ATP-dependent interactions between DnaJ, DnaK and GrpE are required for fully efficient folding. Also involved, together with DnaK and GrpE, in the DNA replication of plasmids through activation of initiation proteins. The protein is Chaperone protein DnaJ of Lysinibacillus sphaericus (Bacillus sphaericus).